Consider the following 254-residue polypeptide: Chalcone isomerase cfoK (254 aa).

Residues histidine 33 and tyrosine 50 contribute to the active site.

The catalysed reaction is a chalcone = a flavanone.. It functions in the pathway secondary metabolite biosynthesis; flavonoid biosynthesis. Functionally, chalcone isomerase; part of the gene cluster that mediates the biosynthesis of chlorflavonin, a fungal flavonoid with acetolactate synthase inhibitory activity. Within the pathway, cfoK acts as chalcone isomerase (CHI), the key enzyme responsible for the tricyclic formation of flavanone through Michael-type intramolecular cyclization of chalcone. The hydrogen at C2'-OH is extracted by the imidazole ring of His-33, which induces the oxa-Michael addition to form the intermediate enolate through 6-endo-trig mode cyclization. The enolate can then be stabilized by a hydrogen bond with the Tyr-50 residue. Following enol tautomerization, the C ring, a gamma-pyranone ring, is formed. The pathway begins with the PKS-NRPS hybrid synthetase cfoA that uses benzoic acid or p-hydroxybenzoic acid as a starter unit with four rounds of chain elongation using malonyl-CoA to form the chalcone skeleton. Then, a new type of chalcone isomerase, cfoK, catalyzes the conversion of the chalcone into a flavanone by a histidine-mediated oxa-Michael addition mechanism. The desaturation of flavanone to flavone is catalyzed by a new type of flavone synthase, the flavin mononucleotide (FMN)-dependent oxidoreductase cfoJ. Monooxygenases cfoF, cfoG, and P450 cfoH are responsible for the hydroxylation of the flavonoid skeleton at sites C3, C8, and C2', respectively. Like cfoF, the dehydratase cfoI plays also a role in the hydroxylation of position C3. Methyltransferases cfoB, cfoC, and cfoD then catalyze the methylation of C7-OH, C8-OH, and C3-OH, respectively. Finally, the monooxygenase cfoE is responsible for the chlorination of flavonoid at position C3'. This chain is Chalcone isomerase cfoK, found in Aspergillus candidus.